We begin with the raw amino-acid sequence, 394 residues long: Elongation factor Tu (394 aa).

Residues 10–205 (KPHMNVGTIG…TMDSYFDLPE (196 aa)) enclose the tr-type G domain. The tract at residues 19-26 (GHVDHGKT) is G1. Residue 19–26 (GHVDHGKT) coordinates GTP. Thr-26 is a binding site for Mg(2+). Positions 61–65 (GITIN) are G2. The tract at residues 82–85 (DCPG) is G3. GTP is bound by residues 82 to 86 (DCPGH) and 137 to 140 (NKLD). Residues 137 to 140 (NKLD) are G4. The segment at 173-175 (SAF) is G5.

Belongs to the TRAFAC class translation factor GTPase superfamily. Classic translation factor GTPase family. EF-Tu/EF-1A subfamily. Monomer.

The protein resides in the cytoplasm. It carries out the reaction GTP + H2O = GDP + phosphate + H(+). Functionally, GTP hydrolase that promotes the GTP-dependent binding of aminoacyl-tRNA to the A-site of ribosomes during protein biosynthesis. The chain is Elongation factor Tu from Borrelia hermsii (strain HS1 / DAH).